The sequence spans 416 residues: Keratin, type I cuticular Ha1 (416 aa).

The segment at 2–56 is head; that stretch reads PYNCCLPALSCRTSCSSRPCVPPSCHGCTLPGACNIPANVGNCNWFCEGSFNGNE. An IF rod domain is found at 56 to 367; sequence EKETMQFLND…GLLESEDCKL (312 aa). The interval 57-91 is coil 1A; the sequence is KETMQFLNDRLASYMEKVRQLERENAELECRIQER. Residues 92-102 are linker 1; the sequence is NQQQDPLVCPA. The tract at residues 103-203 is coil 1B; sequence YQAYFRTIEE…HEEEVNTLRC (101 aa). Positions 204–219 are linker 12; that stretch reads QLGDRLNVEVDAAPTV. Positions 220 to 363 are coil 2; that stretch reads DLNRVLNETR…NTYRGLLESE (144 aa). The tract at residues 364-416 is tail; sequence DCKLPCNPCATSNACGKPIGPCVSNPCVPCPPPAPCTPCVPRPRCGPCNSFVR.

The protein belongs to the intermediate filament family.

The polypeptide is Keratin, type I cuticular Ha1 (Krt31) (Mus musculus (Mouse)).